A 562-amino-acid chain; its full sequence is Cytosolic invertase 1 (562 aa).

Belongs to the glycosyl hydrolase 100 family.

Its subcellular location is the cytoplasm. It is found in the cytosol. It carries out the reaction Hydrolysis of terminal non-reducing beta-D-fructofuranoside residues in beta-D-fructofuranosides.. Cytosolic invertase that cleaves sucrose into glucose and fructose and is involved in the regulation of primary root elongation, lateral root formation, floral transition and pollen development. The polypeptide is Cytosolic invertase 1 (Oryza sativa subsp. japonica (Rice)).